The following is a 241-amino-acid chain: MDWRDQGILLTVRRHGESSALIEVFTEDHGLHAGLVRGGASRKMAPHLQPGAQLDLTWSARLEDHLGTYKAEPLRSRAGMALSGRLALAGLNAVCALLAFALPDRAPYPALYHRSSALLDLLDSEDLWPLAYLRWELSLLEDLGYGLDLSACAATGVTQDLRYVSPKTGRAVSGAAAGEWADRLLPLPPVMRGEGAAEDIEILTALRTTGFFLESKLAPALGNRPIPEARGRFLDALARRV.

It belongs to the RecO family.

Functionally, involved in DNA repair and RecF pathway recombination. This is DNA repair protein RecO from Ruegeria sp. (strain TM1040) (Silicibacter sp.).